Here is a 774-residue protein sequence, read N- to C-terminus: Glycophorin-binding protein 130 (774 aa).

The PEXEL motif motif lies at 84 to 88 (RILAE). Disordered regions lie at residues 97-243 (EKTT…AADP), 256-291 (LTNT…EYAS), 310-334 (DPND…PEGQ), 358-383 (NTDP…DPEG), 410-434 (DPND…PEGQ), 458-481 (NTDP…SDPE), 509-533 (DPND…PEGQ), 609-632 (DPND…DPEG), 661-682 (NDEV…DPEG), and 709-734 (DPND…EGQI). Basic and acidic residues-rich tracts occupy residues 117 to 140 (TKKD…SEKQ) and 174 to 198 (KKEE…EPKA). The segment covering 201–228 (VSQKPSTSTRSNNEVKIRAASNQETLTS) has biased composition (polar residues). 11 GBP repeats span residues 226–275 (LTSA…NKED), 276–325 (LTSA…NKED), 326–375 (LTSA…NKED), 376–425 (LTSA…NKED), 426–474 (LTSA…DNKE), 475–524 (LTSS…NKED), 525–574 (LTSA…NKEE), 575–624 (LTSS…NKED), 625–674 (LTSA…NKED), 675–724 (LTSA…NKED), and 725–774 (LTSA…NNEA). 9 stretches are compositionally biased toward basic and acidic residues: residues 264-276 (EVER…KEDL), 314-326 (DVER…KEDL), 364-376 (EVER…KEDL), 414-426 (EVER…KEDL), 464-476 (EVER…KELT), 513-525 (EVER…KEDL), 613-625 (EVER…KEDL), 663-675 (EVER…KEDL), and 713-725 (DVER…KEDL).

Interacts with host glycophorin.

It localises to the secreted. The protein resides in the cell surface. Its subcellular location is the host cytoplasm. Its function is as follows. Involved in merozoite invasion of host erythrocytes. The protein is Glycophorin-binding protein 130 of Plasmodium falciparum (isolate FCR-3 / Gambia).